The following is a 325-amino-acid chain: Tetraacyldisaccharide 4'-kinase (325 aa).

Residue Thr-55–Thr-62 participates in ATP binding.

This sequence belongs to the LpxK family.

The catalysed reaction is a lipid A disaccharide + ATP = a lipid IVA + ADP + H(+). It participates in glycolipid biosynthesis; lipid IV(A) biosynthesis; lipid IV(A) from (3R)-3-hydroxytetradecanoyl-[acyl-carrier-protein] and UDP-N-acetyl-alpha-D-glucosamine: step 6/6. Transfers the gamma-phosphate of ATP to the 4'-position of a tetraacyldisaccharide 1-phosphate intermediate (termed DS-1-P) to form tetraacyldisaccharide 1,4'-bis-phosphate (lipid IVA). The chain is Tetraacyldisaccharide 4'-kinase from Salmonella typhi.